Consider the following 87-residue polypeptide: MANSPQAKKRARQNEARFQINKARRSRIRTFLRRVEEAIASGDKEAATAALRAAQPELMRGVTKGVFHKNTAARKMSRLAARVKVLG.

It belongs to the bacterial ribosomal protein bS20 family.

Functionally, binds directly to 16S ribosomal RNA. This chain is Small ribosomal subunit protein bS20, found in Roseobacter denitrificans (strain ATCC 33942 / OCh 114) (Erythrobacter sp. (strain OCh 114)).